Consider the following 313-residue polypeptide: tRNA dimethylallyltransferase (313 aa).

10 to 17 (GPTASGKT) is an ATP binding site. 12–17 (TASGKT) is a substrate binding site. 3 interaction with substrate tRNA regions span residues 35–38 (DSAM), 159–163 (QRIQR), and 240–245 (RCVGYR).

It belongs to the IPP transferase family. In terms of assembly, monomer. Mg(2+) is required as a cofactor.

It catalyses the reaction adenosine(37) in tRNA + dimethylallyl diphosphate = N(6)-dimethylallyladenosine(37) in tRNA + diphosphate. Functionally, catalyzes the transfer of a dimethylallyl group onto the adenine at position 37 in tRNAs that read codons beginning with uridine, leading to the formation of N6-(dimethylallyl)adenosine (i(6)A). The sequence is that of tRNA dimethylallyltransferase from Legionella pneumophila (strain Lens).